The chain runs to 224 residues: Flagellar L-ring protein (224 aa).

The first 15 residues, methionine 1–alanine 15, serve as a signal peptide directing secretion. The N-palmitoyl cysteine moiety is linked to residue cysteine 16. A lipid anchor (S-diacylglycerol cysteine) is attached at cysteine 16.

It belongs to the FlgH family. In terms of assembly, the basal body constitutes a major portion of the flagellar organelle and consists of four rings (L,P,S, and M) mounted on a central rod.

It is found in the cell outer membrane. The protein resides in the bacterial flagellum basal body. In terms of biological role, assembles around the rod to form the L-ring and probably protects the motor/basal body from shearing forces during rotation. This chain is Flagellar L-ring protein, found in Shewanella baltica (strain OS185).